The following is a 256-amino-acid chain: uncharacterized protein (256 aa).

2 consecutive transmembrane segments (helical) span residues 181–201 (CCII…ASMV) and 231–251 (GIAV…GLIA).

The protein localises to the cell membrane. This is an uncharacterized protein from Methanocaldococcus jannaschii (strain ATCC 43067 / DSM 2661 / JAL-1 / JCM 10045 / NBRC 100440) (Methanococcus jannaschii).